We begin with the raw amino-acid sequence, 246 residues long: Carboxy-S-adenosyl-L-methionine synthase (246 aa).

S-adenosyl-L-methionine is bound by residues tyrosine 39, 64 to 66, 89 to 90, 117 to 118, asparagine 132, and arginine 199; these read GCS, DN, and DI.

The protein belongs to the class I-like SAM-binding methyltransferase superfamily. Cx-SAM synthase family. Homodimer.

The catalysed reaction is prephenate + S-adenosyl-L-methionine = carboxy-S-adenosyl-L-methionine + 3-phenylpyruvate + H2O. In terms of biological role, catalyzes the conversion of S-adenosyl-L-methionine (SAM) to carboxy-S-adenosyl-L-methionine (Cx-SAM). This is Carboxy-S-adenosyl-L-methionine synthase from Erwinia tasmaniensis (strain DSM 17950 / CFBP 7177 / CIP 109463 / NCPPB 4357 / Et1/99).